The sequence spans 107 residues: Probable 4-amino-4-deoxy-L-arabinose-phosphoundecaprenol flippase subunit ArnE (107 aa).

The region spanning 31 to 105 (RVWGWLALSL…IIVGIILLGG (75 aa)) is the EamA domain. A run of 3 helical transmembrane segments spans residues 34–54 (GWLA…LFVL), 57–77 (VPVS…TLAA), and 85–105 (IALR…LLGG).

It belongs to the ArnE family. In terms of assembly, heterodimer of ArnE and ArnF.

Its subcellular location is the cell inner membrane. The protein operates within bacterial outer membrane biogenesis; lipopolysaccharide biosynthesis. In terms of biological role, translocates 4-amino-4-deoxy-L-arabinose-phosphoundecaprenol (alpha-L-Ara4N-phosphoundecaprenol) from the cytoplasmic to the periplasmic side of the inner membrane. In Enterobacter sp. (strain 638), this protein is Probable 4-amino-4-deoxy-L-arabinose-phosphoundecaprenol flippase subunit ArnE.